A 594-amino-acid polypeptide reads, in one-letter code: Pre-mRNA-processing protein 45 (594 aa).

5 disordered regions span residues 36 to 63, 223 to 254, 370 to 426, 498 to 523, and 566 to 594; these read TTEY…RKGW, PPRF…TAQD, ETGI…SEMR, AGSS…SKDR, and EQFM…ARDE. 2 stretches are compositionally biased toward pro residues: residues 44 to 53 and 235 to 244; these read APLPATPGPQ and PAEPPPPVLQ. A compositionally biased stretch (acidic residues) spans 383-397; that stretch reads GSEEESDEEEEDEEA. 3 stretches are compositionally biased toward basic and acidic residues: residues 398–417, 513–523, and 578–594; these read IRER…KEMR, EGIKEEMSKDR, and RTAE…ARDE.

The protein belongs to the SNW family. Associated with the spliceosome.

Its subcellular location is the nucleus. Involved in pre-mRNA splicing. This is Pre-mRNA-processing protein 45 (PRP45) from Cryptococcus neoformans var. neoformans serotype D (strain B-3501A) (Filobasidiella neoformans).